The following is a 20-amino-acid chain: Equinatoxin-3 (20 aa).

The plays an important role in the hemolytic activity stretch occupies residues 3–12 (AVAGAIIKGA). The tract at residues 11–20 (GAALTFNVLQ) is N-terminal region.

This sequence belongs to the actinoporin family. Sea anemone subfamily. Octamer or nonamer in membranes. Monomer in the soluble state.

Its subcellular location is the secreted. The protein localises to the nematocyst. The protein resides in the target cell membrane. Its function is as follows. Pore-forming protein that forms cations-selective hydrophilic pores of around 1 nm and causes cardiac stimulation and cytolysis. Pore formation is a multi-step process that involves specific recognition of membrane sphingomyelin (but neither cholesterol nor phosphatidylcholine) using aromatic rich region and adjacent phosphocholine (POC) binding site, firm binding to the membrane (mainly driven by hydrophobic interactions) accompanied by the transfer of the N-terminal region to the lipid-water interface and finally pore formation after oligomerization of monomers. Cytolytic effects include red blood cells hemolysis, platelet aggregation and lysis, cytotoxic and cytostatic effects on fibroblasts. Lethality in mammals has been ascribed to severe vasospasm of coronary vessels, cardiac arrhythmia, and inotropic effects. This chain is Equinatoxin-3, found in Actinia equina (Beadlet anemone).